Here is a 547-residue protein sequence, read N- to C-terminus: Chaperonin GroEL (547 aa).

ATP is bound by residues 30 to 33 (TLGP), K51, 87 to 91 (DGTTT), G415, and D496. Residues 528–547 (KEGAAPAGGMPDMGGMGGMM) form a disordered region. Positions 538 to 547 (PDMGGMGGMM) are enriched in gly residues.

It belongs to the chaperonin (HSP60) family. Forms a cylinder of 14 subunits composed of two heptameric rings stacked back-to-back. Interacts with the co-chaperonin GroES.

It localises to the cytoplasm. It carries out the reaction ATP + H2O + a folded polypeptide = ADP + phosphate + an unfolded polypeptide.. Functionally, together with its co-chaperonin GroES, plays an essential role in assisting protein folding. The GroEL-GroES system forms a nano-cage that allows encapsulation of the non-native substrate proteins and provides a physical environment optimized to promote and accelerate protein folding. This Ruegeria sp. (strain TM1040) (Silicibacter sp.) protein is Chaperonin GroEL.